The primary structure comprises 469 residues: Neuraminidase (469 aa).

Over 1 to 9 the chain is Intravirion; the sequence is MNPNQKIIT. A helical membrane pass occupies residues 10-30; the sequence is IGSVSLTIATVCFLMQIAILV. The tract at residues 11–33 is involved in apical transport and lipid raft association; it reads GSVSLTIATVCFLMQIAILVTTV. The Virion surface segment spans residues 31–469; sequence TTVTLHFKQH…DGANINFMPI (439 aa). The segment at 36–88 is hypervariable stalk region; sequence HFKQHECDSPASNQVMPCEPIIIERNITEIVYLNNTTIEKEICPEVVEYRNWS. N-linked (GlcNAc...) asparagine; by host glycans are attached at residues Asn-61, Asn-69, Asn-70, and Asn-86. The tract at residues 91–469 is head of neuraminidase; it reads QCQITGFAPF…DGANINFMPI (379 aa). Cystine bridges form between Cys-92-Cys-417, Cys-124-Cys-129, Cys-183-Cys-230, Cys-232-Cys-237, Cys-278-Cys-291, Cys-280-Cys-289, Cys-318-Cys-337, and Cys-421-Cys-447. Substrate is bound at residue Arg-118. N-linked (GlcNAc...) asparagine; by host glycosylation occurs at Asn-146. Asp-151 functions as the Proton donor/acceptor in the catalytic mechanism. Arg-152 provides a ligand contact to substrate. Asn-200 and Asn-234 each carry an N-linked (GlcNAc...) asparagine; by host glycan. Residue 276-277 participates in substrate binding; it reads EE. Residue Arg-292 participates in substrate binding. Residues Asp-293, Gly-297, and Asp-324 each contribute to the Ca(2+) site. The segment at 324–350 is disordered; that stretch reads DTPRNDDRSSNSNCRNPNNERGNPGVK. Low complexity predominate over residues 333 to 347; that stretch reads SNSNCRNPNNERGNP. Arg-371 lines the substrate pocket. A glycan (N-linked (GlcNAc...) asparagine; by host) is linked at Asn-402. The active-site Nucleophile is the Tyr-406.

This sequence belongs to the glycosyl hydrolase 34 family. As to quaternary structure, homotetramer. Requires Ca(2+) as cofactor. Post-translationally, N-glycosylated.

It localises to the virion membrane. The protein resides in the host apical cell membrane. The catalysed reaction is Hydrolysis of alpha-(2-&gt;3)-, alpha-(2-&gt;6)-, alpha-(2-&gt;8)- glycosidic linkages of terminal sialic acid residues in oligosaccharides, glycoproteins, glycolipids, colominic acid and synthetic substrates.. With respect to regulation, inhibited by the neuraminidase inhibitors zanamivir (Relenza) and oseltamivir (Tamiflu). These drugs interfere with the release of progeny virus from infected cells and are effective against all influenza strains. Resistance to neuraminidase inhibitors is quite rare. Catalyzes the removal of terminal sialic acid residues from viral and cellular glycoconjugates. Cleaves off the terminal sialic acids on the glycosylated HA during virus budding to facilitate virus release. Additionally helps virus spread through the circulation by further removing sialic acids from the cell surface. These cleavages prevent self-aggregation and ensure the efficient spread of the progeny virus from cell to cell. Otherwise, infection would be limited to one round of replication. Described as a receptor-destroying enzyme because it cleaves a terminal sialic acid from the cellular receptors. May facilitate viral invasion of the upper airways by cleaving the sialic acid moieties on the mucin of the airway epithelial cells. Likely to plays a role in the budding process through its association with lipid rafts during intracellular transport. May additionally display a raft-association independent effect on budding. Plays a role in the determination of host range restriction on replication and virulence. Sialidase activity in late endosome/lysosome traffic seems to enhance virus replication. The protein is Neuraminidase of Aves (Human).